The sequence spans 265 residues: Oxygen-evolving enhancer protein 2-2, chloroplastic (265 aa).

The transit peptide at Met1–Ala79 directs the protein to the chloroplast.

The protein belongs to the PsbP family.

It localises to the plastid. The protein localises to the chloroplast thylakoid membrane. In terms of biological role, may be involved in the regulation of photosystem II. The protein is Oxygen-evolving enhancer protein 2-2, chloroplastic (PSBP2) of Nicotiana tabacum (Common tobacco).